A 498-amino-acid chain; its full sequence is Pyridine nucleotide-disulfide oxidoreductase domain-containing protein 1 (498 aa).

At M1 the chain carries N-acetylmethionine.

Belongs to the class-I pyridine nucleotide-disulfide oxidoreductase family. PYROXD1 subfamily. It depends on FAD as a cofactor.

Its subcellular location is the nucleus. It localises to the cytoplasm. The protein resides in the myofibril. It is found in the sarcomere. Its function is as follows. Probable FAD-dependent oxidoreductase; involved in the cellular oxidative stress response. Required for normal sarcomere structure and muscle fiber integrity. The polypeptide is Pyridine nucleotide-disulfide oxidoreductase domain-containing protein 1 (Pyroxd1) (Mus musculus (Mouse)).